The primary structure comprises 327 residues: Methionyl-tRNA formyltransferase (327 aa).

122 to 125 (SLLP) provides a ligand contact to (6S)-5,6,7,8-tetrahydrofolate.

The protein belongs to the Fmt family.

The catalysed reaction is L-methionyl-tRNA(fMet) + (6R)-10-formyltetrahydrofolate = N-formyl-L-methionyl-tRNA(fMet) + (6S)-5,6,7,8-tetrahydrofolate + H(+). Attaches a formyl group to the free amino group of methionyl-tRNA(fMet). The formyl group appears to play a dual role in the initiator identity of N-formylmethionyl-tRNA by promoting its recognition by IF2 and preventing the misappropriation of this tRNA by the elongation apparatus. The chain is Methionyl-tRNA formyltransferase from Ralstonia pickettii (strain 12J).